Here is a 131-residue protein sequence, read N- to C-terminus: Small ribosomal subunit protein uS11 (131 aa).

The protein belongs to the universal ribosomal protein uS11 family. In terms of assembly, part of the 30S ribosomal subunit. Interacts with proteins S7 and S18. Binds to IF-3.

Its function is as follows. Located on the platform of the 30S subunit, it bridges several disparate RNA helices of the 16S rRNA. Forms part of the Shine-Dalgarno cleft in the 70S ribosome. The chain is Small ribosomal subunit protein uS11 from Exiguobacterium sibiricum (strain DSM 17290 / CCUG 55495 / CIP 109462 / JCM 13490 / 255-15).